The primary structure comprises 183 residues: Hypoxanthine/guanine phosphoribosyltransferase (183 aa).

Belongs to the purine/pyrimidine phosphoribosyltransferase family. Archaeal HPRT subfamily. As to quaternary structure, homodimer.

The protein resides in the cytoplasm. It carries out the reaction IMP + diphosphate = hypoxanthine + 5-phospho-alpha-D-ribose 1-diphosphate. The enzyme catalyses GMP + diphosphate = guanine + 5-phospho-alpha-D-ribose 1-diphosphate. It functions in the pathway purine metabolism; IMP biosynthesis via salvage pathway; IMP from hypoxanthine: step 1/1. Functionally, catalyzes a salvage reaction resulting in the formation of IMP that is energically less costly than de novo synthesis. The chain is Hypoxanthine/guanine phosphoribosyltransferase from Methanocaldococcus vulcanius (strain ATCC 700851 / DSM 12094 / M7) (Methanococcus vulcanius).